Here is a 446-residue protein sequence, read N- to C-terminus: Glucose-6-phosphate isomerase (446 aa).

The active-site Proton donor is the Glu288. Active-site residues include His309 and Lys423.

It belongs to the GPI family.

It localises to the cytoplasm. It carries out the reaction alpha-D-glucose 6-phosphate = beta-D-fructose 6-phosphate. It functions in the pathway carbohydrate biosynthesis; gluconeogenesis. Its pathway is carbohydrate degradation; glycolysis; D-glyceraldehyde 3-phosphate and glycerone phosphate from D-glucose: step 2/4. Functionally, catalyzes the reversible isomerization of glucose-6-phosphate to fructose-6-phosphate. The sequence is that of Glucose-6-phosphate isomerase from Lacticaseibacillus casei (strain BL23) (Lactobacillus casei).